Here is a 206-residue protein sequence, read N- to C-terminus: Urease accessory protein UreE (206 aa).

The tract at residues 136-206 (PEGGAYAEPS…HGHAHAHDRK (71 aa)) is disordered. Composition is skewed to basic and acidic residues over residues 148 to 169 (QGHD…GGHE) and 177 to 191 (HGHA…EHCG). The segment covering 192–206 (HGHHHHGHAHAHDRK) has biased composition (basic residues).

The protein belongs to the UreE family.

It localises to the cytoplasm. Functionally, involved in urease metallocenter assembly. Binds nickel. Probably functions as a nickel donor during metallocenter assembly. This chain is Urease accessory protein UreE, found in Bradyrhizobium sp. (strain BTAi1 / ATCC BAA-1182).